We begin with the raw amino-acid sequence, 451 residues long: Tubulin beta chain (451 aa).

8 residues coordinate GTP: Gln-11, Glu-69, Ser-138, Gly-142, Thr-143, Gly-144, Asn-204, and Asn-226. Glu-69 is a Mg(2+) binding site. The segment at 426–451 is disordered; it reads QDATAEEEGEFDENEGAEGEEQPADY. Positions 429-451 are enriched in acidic residues; it reads TAEEEGEFDENEGAEGEEQPADY.

It belongs to the tubulin family. Dimer of alpha and beta chains. A typical microtubule is a hollow water-filled tube with an outer diameter of 25 nm and an inner diameter of 15 nM. Alpha-beta heterodimers associate head-to-tail to form protofilaments running lengthwise along the microtubule wall with the beta-tubulin subunit facing the microtubule plus end conferring a structural polarity. Microtubules usually have 13 protofilaments but different protofilament numbers can be found in some organisms and specialized cells. Mg(2+) serves as cofactor.

It is found in the cytoplasm. The protein localises to the cytoskeleton. Tubulin is the major constituent of microtubules, a cylinder consisting of laterally associated linear protofilaments composed of alpha- and beta-tubulin heterodimers. Microtubules grow by the addition of GTP-tubulin dimers to the microtubule end, where a stabilizing cap forms. Below the cap, tubulin dimers are in GDP-bound state, owing to GTPase activity of alpha-tubulin. The polypeptide is Tubulin beta chain (Naegleria pringsheimi (Amoeba)).